The following is a 218-amino-acid chain: Octanoyltransferase (218 aa).

The 183-residue stretch at Ala32–Asp214 folds into the BPL/LPL catalytic domain. Substrate is bound by residues Arg71 to His78, Ser143 to Gly145, and Gly156 to Ala158. The active-site Acyl-thioester intermediate is Cys174.

It belongs to the LipB family.

It localises to the cytoplasm. The enzyme catalyses octanoyl-[ACP] + L-lysyl-[protein] = N(6)-octanoyl-L-lysyl-[protein] + holo-[ACP] + H(+). It functions in the pathway protein modification; protein lipoylation via endogenous pathway; protein N(6)-(lipoyl)lysine from octanoyl-[acyl-carrier-protein]: step 1/2. Its function is as follows. Catalyzes the transfer of endogenously produced octanoic acid from octanoyl-acyl-carrier-protein onto the lipoyl domains of lipoate-dependent enzymes. Lipoyl-ACP can also act as a substrate although octanoyl-ACP is likely to be the physiological substrate. The polypeptide is Octanoyltransferase (Histophilus somni (strain 129Pt) (Haemophilus somnus)).